Reading from the N-terminus, the 382-residue chain is Chaperone protein DnaJ (382 aa).

The J domain occupies 6–70; it reads DYYEILGLPK…EKRAQYDRFG (65 aa). The CR-type zinc-finger motif lies at 131–213; that stretch reads GVRKDIDIPR…CGGAGRVRNK (83 aa). 8 residues coordinate Zn(2+): cysteine 144, cysteine 147, cysteine 161, cysteine 164, cysteine 187, cysteine 190, cysteine 201, and cysteine 204. 4 CXXCXGXG motif repeats span residues 144 to 151, 161 to 168, 187 to 194, and 201 to 208; these read CSTCSGTG, CPTCGGTG, CSTCHGRG, and CPVCGGAG. The interval 146–168 is disordered; it reads TCSGTGAKPGTSPKRCPTCGGTG. The interval 348–382 is disordered; that stretch reads FENLSKGKKPQEEEKSKAEKHKKGIFEKVKDAFES. A compositionally biased stretch (basic and acidic residues) spans 371–382; that stretch reads GIFEKVKDAFES.

Belongs to the DnaJ family. Homodimer. Zn(2+) is required as a cofactor.

It localises to the cytoplasm. Functionally, participates actively in the response to hyperosmotic and heat shock by preventing the aggregation of stress-denatured proteins and by disaggregating proteins, also in an autonomous, DnaK-independent fashion. Unfolded proteins bind initially to DnaJ; upon interaction with the DnaJ-bound protein, DnaK hydrolyzes its bound ATP, resulting in the formation of a stable complex. GrpE releases ADP from DnaK; ATP binding to DnaK triggers the release of the substrate protein, thus completing the reaction cycle. Several rounds of ATP-dependent interactions between DnaJ, DnaK and GrpE are required for fully efficient folding. Also involved, together with DnaK and GrpE, in the DNA replication of plasmids through activation of initiation proteins. The chain is Chaperone protein DnaJ from Methanosarcina acetivorans (strain ATCC 35395 / DSM 2834 / JCM 12185 / C2A).